We begin with the raw amino-acid sequence, 204 residues long: MKISKRQQDIYEFIKSEVKEKGYPPSVREIGEAVGLASSSTVHGHLARLEGKGLIRRDPTKPRAIEILSLEDEAETPNVVNIPIIGKVTAGMPITAIENIEEYFPLPEYMAAGETNVFMLEIDGESMINAGILDGDKVIVRQQNSAINGEIVVAMTDENEATCKRFYKEANHFRLQPENDALEPIILNNVTILGKVIGLYRDIR.

A DNA-binding region (H-T-H motif) is located at residues 27-47 (VREIGEAVGLASSSTVHGHLA). Catalysis depends on for autocatalytic cleavage activity residues S126 and K164.

It belongs to the peptidase S24 family. As to quaternary structure, homodimer.

It catalyses the reaction Hydrolysis of Ala-|-Gly bond in repressor LexA.. Represses a number of genes involved in the response to DNA damage (SOS response), including recA and lexA. In the presence of single-stranded DNA, RecA interacts with LexA causing an autocatalytic cleavage which disrupts the DNA-binding part of LexA, leading to derepression of the SOS regulon and eventually DNA repair. The polypeptide is LexA repressor (Listeria welshimeri serovar 6b (strain ATCC 35897 / DSM 20650 / CCUG 15529 / CIP 8149 / NCTC 11857 / SLCC 5334 / V8)).